Here is a 1091-residue protein sequence, read N- to C-terminus: ATP-dependent helicase/deoxyribonuclease subunit B (1091 aa).

It belongs to the helicase family. AddB/RexB type 2 subfamily. Heterodimer of AddA and RexB. The cofactor is Mg(2+).

Functionally, the heterodimer acts as both an ATP-dependent DNA helicase and an ATP-dependent, dual-direction single-stranded exonuclease. Recognizes the chi site generating a DNA molecule suitable for the initiation of homologous recombination. This subunit has 5' -&gt; 3' nuclease activity but not helicase activity. This Streptococcus pneumoniae (strain CGSP14) protein is ATP-dependent helicase/deoxyribonuclease subunit B.